Consider the following 865-residue polypeptide: Alanine--tRNA ligase (865 aa).

Residues His552, His556, Cys654, and His658 each contribute to the Zn(2+) site.

The protein belongs to the class-II aminoacyl-tRNA synthetase family. Zn(2+) is required as a cofactor.

The protein localises to the cytoplasm. The catalysed reaction is tRNA(Ala) + L-alanine + ATP = L-alanyl-tRNA(Ala) + AMP + diphosphate. Catalyzes the attachment of alanine to tRNA(Ala) in a two-step reaction: alanine is first activated by ATP to form Ala-AMP and then transferred to the acceptor end of tRNA(Ala). Also edits incorrectly charged Ser-tRNA(Ala) and Gly-tRNA(Ala) via its editing domain. The protein is Alanine--tRNA ligase of Coxiella burnetii (strain RSA 331 / Henzerling II).